The primary structure comprises 374 residues: Pectate lyase 3 (374 aa).

The N-terminal stretch at 1-22 (MKYLLPSTAAGLLLLAAQPTMA) is a signal peptide. Residues cysteine 93 and cysteine 176 are joined by a disulfide bond. Residues aspartate 150, aspartate 152, glutamate 187, and aspartate 191 each contribute to the Ca(2+) site. Arginine 239 is a catalytic residue. Cysteine 350 and cysteine 373 are joined by a disulfide.

Belongs to the polysaccharide lyase 1 family. PLADES subfamily. The cofactor is Ca(2+).

The protein resides in the secreted. It catalyses the reaction Eliminative cleavage of (1-&gt;4)-alpha-D-galacturonan to give oligosaccharides with 4-deoxy-alpha-D-galact-4-enuronosyl groups at their non-reducing ends.. The protein operates within glycan metabolism; pectin degradation; 2-dehydro-3-deoxy-D-gluconate from pectin: step 2/5. Its function is as follows. Involved in maceration and soft-rotting of plant tissue. The chain is Pectate lyase 3 (pel3) from Pectobacterium atrosepticum (strain SCRI 1043 / ATCC BAA-672) (Erwinia carotovora subsp. atroseptica).